The sequence spans 210 residues: uncharacterized protein (210 aa).

The segment covering 101 to 114 has biased composition (low complexity); sequence QELPEPSSPQSQSS. The tract at residues 101 to 166 is disordered; the sequence is QELPEPSSPQ…SSGVSSDLQK (66 aa). A compositionally biased stretch (polar residues) spans 147–164; sequence RSTSPVTASTSSGVSSDL.

This is an uncharacterized protein from Alcelaphine herpesvirus 1 (strain C500) (AlHV-1).